A 161-amino-acid chain; its full sequence is Beta-lactoglobulin-2 (161 aa).

Disulfide bonds link cysteine 66–cysteine 159 and cysteine 106–cysteine 119.

This sequence belongs to the calycin superfamily. Lipocalin family. As to quaternary structure, monomer. In terms of tissue distribution, synthesized in mammary gland and secreted in milk.

It localises to the secreted. Primary component of whey, it binds retinol and is probably involved in the transport of that molecule. This is Beta-lactoglobulin-2 (LGB2) from Canis lupus familiaris (Dog).